The sequence spans 170 residues: Small ribosomal subunit protein uS5 (170 aa).

The region spanning 12–75 (WSELLVSVRR…NAAKKSMIRV (64 aa)) is the S5 DRBM domain.

Belongs to the universal ribosomal protein uS5 family. Part of the 30S ribosomal subunit. Contacts proteins S4 and S8.

Its function is as follows. With S4 and S12 plays an important role in translational accuracy. Functionally, located at the back of the 30S subunit body where it stabilizes the conformation of the head with respect to the body. The chain is Small ribosomal subunit protein uS5 from Wolbachia sp. subsp. Brugia malayi (strain TRS).